A 125-amino-acid polypeptide reads, in one-letter code: Small ribosomal subunit protein uS13 (125 aa).

Residues 92 to 125 form a disordered region; sequence RRSLPVRGQRTRTNARTRKGKRKTVAGKKKAVKK.

This sequence belongs to the universal ribosomal protein uS13 family. Part of the 30S ribosomal subunit. Forms a loose heterodimer with protein S19. Forms two bridges to the 50S subunit in the 70S ribosome.

Located at the top of the head of the 30S subunit, it contacts several helices of the 16S rRNA. In the 70S ribosome it contacts the 23S rRNA (bridge B1a) and protein L5 of the 50S subunit (bridge B1b), connecting the 2 subunits; these bridges are implicated in subunit movement. Contacts the tRNAs in the A and P-sites. This is Small ribosomal subunit protein uS13 from Pelodictyon phaeoclathratiforme (strain DSM 5477 / BU-1).